Reading from the N-terminus, the 1107-residue chain is Phospholipid-transporting ATPase 2 (1107 aa).

The Cytoplasmic segment spans residues 1-33 (MKRFVYINDDEASKELCCDNRISNRKYTLWNFL). The chain crosses the membrane as a helical span at residues 34–55 (PKNLWEQFSRFMNQYFLLIACL). Over 56–60 (QLWSL) the chain is Extracellular. A helical membrane pass occupies residues 61–83 (ITPVNPASTWGPLIFIFAVSASK). Topologically, residues 84–268 (EAWDDYHRYL…TAMDAMIDKL (185 aa)) are cytoplasmic. The chain crosses the membrane as a helical span at residues 269–290 (TGAIFVFQIVVVLVLGIAGNVW). Over 291 to 315 (KDTEARKQWYVQYPEEAPWYELLVI) the chain is Extracellular. The helical transmembrane segment at 316–333 (PLRFELLCSIMIPISIKV) threads the bilayer. The Cytoplasmic portion of the chain corresponds to 334-807 (SLDLVKGLYA…HGRYSYNRTA (474 aa)). The 4-aspartylphosphate intermediate role is filled by aspartate 381. Aspartate 752 and aspartate 756 together coordinate Mg(2+). The chain crosses the membrane as a helical span at residues 808 to 827 (FLSQYSFYKSLLICFIQIFF). Residues 828–841 (SFISGVSGTSLFNS) lie on the Extracellular side of the membrane. A helical transmembrane segment spans residues 842–860 (VSLMAYNVFYTSVPVLVSV). Residues 861 to 890 (IDKDLSEASVMQHPQILFYCQAGRLLNPST) are Cytoplasmic-facing. The helical transmembrane segment at 891 to 912 (FAGWFGRSLFHAIIVFVITIHA) threads the bilayer. Topologically, residues 913–919 (YAYEKSE) are extracellular. A helical transmembrane segment spans residues 920–942 (MEELGMVALSGCIWLQAFVVAQE). Topologically, residues 943–948 (TNSFTV) are cytoplasmic. Residues 949–969 (LQHLSIWGNLVGFYAINFLFS) form a helical membrane-spanning segment. Residues 970–982 (AIPSSGMYTIMFR) are Extracellular-facing. Residues 983–1007 (LCSQPSYWITMFLIVGAGMGPIFAL) traverse the membrane as a helical segment. Topologically, residues 1008 to 1107 (KYFRYTYRPS…SGYTRNCKDN (100 aa)) are cytoplasmic. A disordered region spans residues 1048-1075 (DLSPISITQPKNRSPVYEPLLSDSPNAT). The residue at position 1050 (serine 1050) is a Phosphoserine.

Belongs to the cation transport ATPase (P-type) (TC 3.A.3) family. Type IV subfamily. Interacts with ALIS1, ALIS3 and ALIS5 in a heterologous system.

The protein localises to the endoplasmic reticulum membrane. Its subcellular location is the prevacuolar compartment membrane. The enzyme catalyses ATP + H2O + phospholipidSide 1 = ADP + phosphate + phospholipidSide 2.. Involved in transport of phospholipids. Contributes to transmembrane flipping of lipids. Requires an interaction with a protein of the ALIS family for activity. Specific for phosphatidylserine and has no activity with lysolipid, phosphatidylcholine or phosphatidylethanolamine. This chain is Phospholipid-transporting ATPase 2, found in Arabidopsis thaliana (Mouse-ear cress).